The primary structure comprises 312 residues: Methionyl-tRNA formyltransferase (312 aa).

Residue 109 to 112 (SLLP) participates in (6S)-5,6,7,8-tetrahydrofolate binding.

The protein belongs to the Fmt family.

It carries out the reaction L-methionyl-tRNA(fMet) + (6R)-10-formyltetrahydrofolate = N-formyl-L-methionyl-tRNA(fMet) + (6S)-5,6,7,8-tetrahydrofolate + H(+). Functionally, attaches a formyl group to the free amino group of methionyl-tRNA(fMet). The formyl group appears to play a dual role in the initiator identity of N-formylmethionyl-tRNA by promoting its recognition by IF2 and preventing the misappropriation of this tRNA by the elongation apparatus. The chain is Methionyl-tRNA formyltransferase from Anaeromyxobacter dehalogenans (strain 2CP-1 / ATCC BAA-258).